Here is a 61-residue protein sequence, read N- to C-terminus: UPF0434 protein PST_2635 (61 aa).

This sequence belongs to the UPF0434 family.

The chain is UPF0434 protein PST_2635 from Stutzerimonas stutzeri (strain A1501) (Pseudomonas stutzeri).